A 400-amino-acid polypeptide reads, in one-letter code: Tryptophan synthase beta chain (400 aa).

An N6-(pyridoxal phosphate)lysine modification is found at Lys-91.

Belongs to the TrpB family. As to quaternary structure, tetramer of two alpha and two beta chains. It depends on pyridoxal 5'-phosphate as a cofactor.

The catalysed reaction is (1S,2R)-1-C-(indol-3-yl)glycerol 3-phosphate + L-serine = D-glyceraldehyde 3-phosphate + L-tryptophan + H2O. It participates in amino-acid biosynthesis; L-tryptophan biosynthesis; L-tryptophan from chorismate: step 5/5. Functionally, the beta subunit is responsible for the synthesis of L-tryptophan from indole and L-serine. The sequence is that of Tryptophan synthase beta chain from Listeria monocytogenes serotype 4b (strain CLIP80459).